The following is a 107-amino-acid chain: Regulatory protein SoxS (107 aa).

Positions 8–106 (QDLIAWIDEH…DRTPSDYRHR (99 aa)) constitute an HTH araC/xylS-type domain. 2 consecutive DNA-binding regions (H-T-H motif) follow at residues 25-46 (DVVAKKSGYSKWYLQRMFRTVT) and 73-96 (IFDIAMDLGYVSQQTFSRVFRRQF).

The protein resides in the cytoplasm. In terms of biological role, transcriptional activator of the superoxide response regulon of E.coli that includes at least 10 genes such as sodA, nfo, zwf and micF. Binds the DNA sequence 5'-GCACN(7)CAA-3'. It also facilitates the subsequent binding of RNA polymerase to the micF and the nfo promoters. In Escherichia coli O157:H7, this protein is Regulatory protein SoxS (soxS).